We begin with the raw amino-acid sequence, 98 residues long: MSSYKYYDLIRKPIITEKTTTLSEQNKYAFYVDKFAEKLTVKKAIEEIFKVKVKKVNILNVKGKKKRFKGIIGTQINRKKAIVTLEKDHNIDFAGGIK.

This sequence belongs to the universal ribosomal protein uL23 family. As to quaternary structure, part of the 50S ribosomal subunit. Contacts protein L29, and trigger factor when it is bound to the ribosome.

One of the early assembly proteins it binds 23S rRNA. One of the proteins that surrounds the polypeptide exit tunnel on the outside of the ribosome. Forms the main docking site for trigger factor binding to the ribosome. The sequence is that of Large ribosomal subunit protein uL23 from Rickettsia felis (strain ATCC VR-1525 / URRWXCal2) (Rickettsia azadi).